The primary structure comprises 279 residues: S-methyl-5'-thioadenosine phosphorylase (279 aa).

Phosphate contacts are provided by residues Ser13, 55–56 (RH), and 88–89 (TA). Met191 lines the substrate pocket. Thr192 contacts phosphate. 215–217 (DYD) is a substrate binding site.

Belongs to the PNP/MTAP phosphorylase family. MTAP subfamily. As to quaternary structure, homotrimer.

It localises to the cytoplasm. It is found in the nucleus. The catalysed reaction is S-methyl-5'-thioadenosine + phosphate = 5-(methylsulfanyl)-alpha-D-ribose 1-phosphate + adenine. The protein operates within amino-acid biosynthesis; L-methionine biosynthesis via salvage pathway; S-methyl-5-thio-alpha-D-ribose 1-phosphate from S-methyl-5'-thioadenosine (phosphorylase route): step 1/1. Functionally, catalyzes the reversible phosphorylation of S-methyl-5'-thioadenosine (MTA) to adenine and 5-methylthioribose-1-phosphate. Involved in the breakdown of MTA, a major by-product of polyamine biosynthesis. Responsible for the first step in the methionine salvage pathway after MTA has been generated from S-adenosylmethionine. Has broad substrate specificity with 6-aminopurine nucleosides as preferred substrates. The polypeptide is S-methyl-5'-thioadenosine phosphorylase (Anopheles darlingi (Mosquito)).